A 101-amino-acid polypeptide reads, in one-letter code: NAD(P)H-quinone oxidoreductase subunit 4L, chloroplastic (101 aa).

Transmembrane regions (helical) follow at residues 2-22, 32-52, and 61-81; these read MLEHVLVLSAYLFSIGIYGLI, MCLELILNAVNLNFVTFSDFF, and IFSIFVIAIAAAEAAIGPAIV.

Belongs to the complex I subunit 4L family. NDH is composed of at least 16 different subunits, 5 of which are encoded in the nucleus.

The protein resides in the plastid. The protein localises to the chloroplast thylakoid membrane. It carries out the reaction a plastoquinone + NADH + (n+1) H(+)(in) = a plastoquinol + NAD(+) + n H(+)(out). The catalysed reaction is a plastoquinone + NADPH + (n+1) H(+)(in) = a plastoquinol + NADP(+) + n H(+)(out). Functionally, NDH shuttles electrons from NAD(P)H:plastoquinone, via FMN and iron-sulfur (Fe-S) centers, to quinones in the photosynthetic chain and possibly in a chloroplast respiratory chain. The immediate electron acceptor for the enzyme in this species is believed to be plastoquinone. Couples the redox reaction to proton translocation, and thus conserves the redox energy in a proton gradient. The protein is NAD(P)H-quinone oxidoreductase subunit 4L, chloroplastic of Fagopyrum esculentum subsp. ancestrale (Wild buckwheat).